A 945-amino-acid polypeptide reads, in one-letter code: Translation initiation factor IF-2 (945 aa).

Disordered regions lie at residues 52-80 (RSHGQSQPKGKITLTRKQTSEIRATDSSG) and 96-357 (MKRD…FQAP). Over residues 153–175 (PEPEPIVEPEPEPEPEPEPEPQP) the composition is skewed to acidic residues. 2 stretches are compositionally biased toward basic and acidic residues: residues 215-283 (DEER…KEAA) and 294-310 (AKTEEKPAGKDAKRTAR). The tr-type G domain occupies 445-614 (PRAPVVTVMG…LLQAEVLELT (170 aa)). Residues 454–461 (GHVDHGKT) form a G1 region. 454–461 (GHVDHGKT) provides a ligand contact to GTP. Residues 479–483 (GITQH) are G2. Residues 500–503 (DTPG) form a G3 region. Residues 500 to 504 (DTPGH) and 554 to 557 (NKID) contribute to the GTP site. The segment at 554–557 (NKID) is G4. Residues 590 to 592 (SAK) are G5.

This sequence belongs to the TRAFAC class translation factor GTPase superfamily. Classic translation factor GTPase family. IF-2 subfamily.

It is found in the cytoplasm. One of the essential components for the initiation of protein synthesis. Protects formylmethionyl-tRNA from spontaneous hydrolysis and promotes its binding to the 30S ribosomal subunits. Also involved in the hydrolysis of GTP during the formation of the 70S ribosomal complex. The chain is Translation initiation factor IF-2 from Aromatoleum aromaticum (strain DSM 19018 / LMG 30748 / EbN1) (Azoarcus sp. (strain EbN1)).